A 353-amino-acid chain; its full sequence is MSRDIIKLDQIDVTFHQKKRTITAVKDVTIHIQEGDIYGIVGYSGAGKSTLVRVINLLQKPSAGKITIDDDVIFDGKVTLTAEQLRRKRQDIGMIFQHFNLMSQKTAEENVAFALKHSELSKEEKKAKVAKLLDLVGLADRAENYPSQLSGGQKQRVAIARALANDPKILISDESTSALDPKTTKQILALLQDLNQKLGLTVVLITHEMQIVKDIANRVAVMQDGHLIEEGSVLEIFSNPKQPLTQDFISTATGIDEAMVKIEKQEIVEHLSENSLLVQLKYAGASTDEPLLNELYKHYQVMANILYGNIEILDGTPVGELVVVLSGEKAALAGAQEAIRQAGVQLKVLKGVQ.

Residues 8 to 249 (LDQIDVTFHQ…PKQPLTQDFI (242 aa)) form the ABC transporter domain. 42 to 49 (GYSGAGKS) is a binding site for ATP.

It belongs to the ABC transporter superfamily. Methionine importer (TC 3.A.1.24) family. As to quaternary structure, the complex is composed of two ATP-binding proteins (MetN), two transmembrane proteins (MetI) and a solute-binding protein (MetQ).

It localises to the cell membrane. It catalyses the reaction L-methionine(out) + ATP + H2O = L-methionine(in) + ADP + phosphate + H(+). The catalysed reaction is D-methionine(out) + ATP + H2O = D-methionine(in) + ADP + phosphate + H(+). Part of the ABC transporter complex MetNIQ involved in methionine import. Responsible for energy coupling to the transport system. This is Methionine import ATP-binding protein MetN from Streptococcus pneumoniae serotype 4 (strain ATCC BAA-334 / TIGR4).